Here is a 741-residue protein sequence, read N- to C-terminus: Methionine--tRNA ligase (741 aa).

The 'HIGH' region motif lies at 11 to 21 (PYANGPIHAGH). Positions 143, 146, 156, and 159 each coordinate Zn(2+). A 'KMSKS' region motif is present at residues 345 to 349 (KFSTS). Threonine 348 lines the ATP pocket. Residues 641 to 741 (EFAKLDLRVG…KEVKLGARIR (101 aa)) form the tRNA-binding domain.

It belongs to the class-I aminoacyl-tRNA synthetase family. MetG type 1 subfamily. In terms of assembly, homodimer. Zn(2+) is required as a cofactor.

It is found in the cytoplasm. The enzyme catalyses tRNA(Met) + L-methionine + ATP = L-methionyl-tRNA(Met) + AMP + diphosphate. Its function is as follows. Is required not only for elongation of protein synthesis but also for the initiation of all mRNA translation through initiator tRNA(fMet) aminoacylation. The polypeptide is Methionine--tRNA ligase (Thermococcus kodakarensis (strain ATCC BAA-918 / JCM 12380 / KOD1) (Pyrococcus kodakaraensis (strain KOD1))).